We begin with the raw amino-acid sequence, 581 residues long: Arginine--tRNA ligase (581 aa).

Residues 126–136 (PNLAKEMHVGH) carry the 'HIGH' region motif.

The protein belongs to the class-I aminoacyl-tRNA synthetase family. Monomer.

The protein localises to the cytoplasm. The enzyme catalyses tRNA(Arg) + L-arginine + ATP = L-arginyl-tRNA(Arg) + AMP + diphosphate. This Shewanella pealeana (strain ATCC 700345 / ANG-SQ1) protein is Arginine--tRNA ligase.